The sequence spans 2145 residues: Mediator of RNA polymerase II transcription subunit 12-like protein (2145 aa).

The tract at residues 1–30 (MAAFGLLSYEQRPLKRPRLGPPDVYPQDPK) is disordered. Residue threonine 462 is modified to Phosphothreonine. Residues 1436–1455 (ELEKGQHLGSSSKKERDRQK) show a composition bias toward basic and acidic residues. Disordered regions lie at residues 1436–1460 (ELEK…KSMS), 1721–1802 (RSYY…ISSQ), and 2029–2145 (DAVL…PSHF). Residues 1768 to 1777 (TKGRKRKTKS) show a composition bias toward basic residues. Over residues 2052-2069 (RQPQVRQQQRLLQMQQPQ) the composition is skewed to low complexity. Positions 2070 to 2079 (QPQPQQPPQP) are enriched in pro residues. The segment covering 2089-2099 (TLGLQAMQPQQ) has biased composition (polar residues). The span at 2104–2124 (RQGLQQTQQQQQTAALVRQLQ) shows a compositional bias: low complexity. Positions 2125-2136 (KQLSSNQPQQGV) are enriched in polar residues.

This sequence belongs to the Mediator complex subunit 12 family. May be a component of the Mediator complex, which is known to be composed of MED1, MED4, MED6, MED7, MED8, MED9, MED10, MED11, MED12, MED13, MED13L, MED14, MED15, MED16, MED17, MED18, MED19, MED20, MED21, MED22, MED23, MED24, MED25, MED26, MED27, MED29, MED30, MED31, CCNC, CDK8 and CDC2L6/CDK11. The MED12, MED13, CCNC and CDK8 subunits form a distinct module termed the CDK8 module. Mediator containing the CDK8 module is less active than Mediator lacking this module in supporting transcriptional activation. Individual preparations of the Mediator complex lacking one or more distinct subunits have been variously termed ARC, CRSP, DRIP, PC2, SMCC and TRAP.

It is found in the nucleus. May be a component of the Mediator complex, a coactivator involved in the regulated transcription of nearly all RNA polymerase II-dependent genes. Mediator functions as a bridge to convey information from gene-specific regulatory proteins to the basal RNA polymerase II transcription machinery. Mediator is recruited to promoters by direct interactions with regulatory proteins and serves as a scaffold for the assembly of a functional preinitiation complex with RNA polymerase II and the general transcription factors. This Homo sapiens (Human) protein is Mediator of RNA polymerase II transcription subunit 12-like protein (MED12L).